The sequence spans 120 residues: Nitrogenase-stabilizing/protective protein NifW (120 aa).

Belongs to the NifW family. Homotrimer; associates with NifD.

Its function is as follows. May protect the nitrogenase Fe-Mo protein from oxidative damage. In Rhodospirillum rubrum (strain ATCC 11170 / ATH 1.1.1 / DSM 467 / LMG 4362 / NCIMB 8255 / S1), this protein is Nitrogenase-stabilizing/protective protein NifW.